A 453-amino-acid chain; its full sequence is BPI fold-containing family B member 6 (453 aa).

The N-terminal stretch at 1–18 is a signal peptide; the sequence is MLRILCLALCSLLTGTRA. N114 carries an N-linked (GlcNAc...) asparagine glycan. An intrachain disulfide couples C137 to C174. A glycan (N-linked (GlcNAc...) asparagine) is linked at N190.

This sequence belongs to the BPI/LBP/Plunc superfamily. BPI/LBP family. Detected at very low levels in normal tonsils, and at higher levels in hypertrophic tonsils.

The protein localises to the secreted. The sequence is that of BPI fold-containing family B member 6 (BPIFB6) from Homo sapiens (Human).